Here is a 185-residue protein sequence, read N- to C-terminus: Pyruvate/ketoisovalerate oxidoreductases common subunit gamma (185 aa).

In terms of assembly, heterotetramer of one alpha, one beta, one delta and one gamma chain.

The catalysed reaction is 2 oxidized [2Fe-2S]-[ferredoxin] + pyruvate + CoA = 2 reduced [2Fe-2S]-[ferredoxin] + acetyl-CoA + CO2 + H(+). It carries out the reaction 3-methyl-2-oxobutanoate + 2 oxidized [2Fe-2S]-[ferredoxin] + CoA = 2-methylpropanoyl-CoA + 2 reduced [2Fe-2S]-[ferredoxin] + CO2 + H(+). The chain is Pyruvate/ketoisovalerate oxidoreductases common subunit gamma (porG) from Pyrococcus furiosus (strain ATCC 43587 / DSM 3638 / JCM 8422 / Vc1).